We begin with the raw amino-acid sequence, 152 residues long: Actin-depolymerizing factor 2, isoform c (152 aa).

An ADF-H domain is found at 4 to 147 (GVKVDPSCKN…DEKSVKSDLM (144 aa)).

This sequence belongs to the actin-binding proteins ADF family.

Its function is as follows. Depolymerizes growing actin filaments in muscle cells; required for the assembly of actin filaments into the functional contractile myofilament lattice of muscle. The protein is Actin-depolymerizing factor 2, isoform c of Caenorhabditis elegans.